The sequence spans 391 residues: Casein kinase II subunit alpha (391 aa).

The interval Q36 to L41 is interaction with beta subunit. One can recognise a Protein kinase domain in the interval Y39–F324. ATP-binding positions include L45–V53 and K68. The active-site Proton acceptor is the D156. Residues T344 and T360 each carry the phosphothreonine; by CDK1 modification. S362 and S370 each carry phosphoserine; by CDK1.

This sequence belongs to the protein kinase superfamily. Ser/Thr protein kinase family. CK2 subfamily. As to quaternary structure, heterotetramer composed of two catalytic subunits (alpha chain and/or alpha' chain) and two regulatory subunits (beta chains). The tetramer can exist as a combination of 2 alpha/2 beta, 2 alpha'/2 beta or 1 alpha/1 alpha'/2 beta subunits. Also part of a CK2-SPT16-SSRP1 complex composed of SSRP1, SUPT16H, CSNK2A1, CSNK2A2 and CSNK2B, which forms following UV irradiation. Interacts with RNPS1. Interacts with SNAI1. Interacts with PML. Interacts with CCAR2. Interacts with HIRIP3. Phosphorylated at Thr-344, Thr-360, Ser-362 and Ser-370 by CDK1 in prophase and metaphase and dephosphorylated during anaphase. Phosphorylation does not directly affect casein kinase 2 activity, but may contribute to its regulation by forming binding sites for interacting proteins and/or targeting it to different compartments.

The protein resides in the nucleus. It catalyses the reaction L-seryl-[protein] + ATP = O-phospho-L-seryl-[protein] + ADP + H(+). It carries out the reaction L-threonyl-[protein] + ATP = O-phospho-L-threonyl-[protein] + ADP + H(+). With respect to regulation, constitutively active protein kinase whose activity is not directly affected by phosphorylation. Seems to be regulated by level of expression and localization. Its function is as follows. Catalytic subunit of a constitutively active serine/threonine-protein kinase complex that phosphorylates a large number of substrates containing acidic residues C-terminal to the phosphorylated serine or threonine. Regulates numerous cellular processes, such as cell cycle progression, apoptosis and transcription, as well as viral infection. May act as a regulatory node which integrates and coordinates numerous signals leading to an appropriate cellular response. During mitosis, functions as a component of the p53/TP53-dependent spindle assembly checkpoint (SAC) that maintains cyclin-B-CDK1 activity and G2 arrest in response to spindle damage. Also required for p53/TP53-mediated apoptosis, phosphorylating 'Ser-392' of p53/TP53 following UV irradiation. Phosphorylates a number of DNA repair proteins in response to DNA damage, such as MDC1, MRE11, RAD9A, RAD51 and HTATSF1, promoting their recruitment to DNA damage sites. Can also negatively regulate apoptosis. Phosphorylates the caspases CASP9 and CASP2 and the apoptotic regulator NOL3. Phosphorylation protects CASP9 from cleavage and activation by CASP8, and inhibits the dimerization of CASP2 and activation of CASP8. Phosphorylates YY1, protecting YY1 from cleavage by CASP7 during apoptosis. Regulates transcription by direct phosphorylation of RNA polymerases I, II, III and IV. Also phosphorylates and regulates numerous transcription factors including NF-kappa-B, STAT1, CREB1, IRF1, IRF2, ATF1, ATF4, SRF, MAX, JUN, FOS, MYC and MYB. Phosphorylates Hsp90 and its co-chaperones FKBP4 and CDC37, which is essential for chaperone function. Mediates sequential phosphorylation of FNIP1, promoting its gradual interaction with Hsp90, leading to activate both kinase and non-kinase client proteins of Hsp90. Regulates Wnt signaling by phosphorylating CTNNB1 and the transcription factor LEF1. Acts as an ectokinase that phosphorylates several extracellular proteins. Phosphorylates PML at 'Ser-565' and primes it for ubiquitin-mediated degradation. Plays an important role in the circadian clock function by phosphorylating BMAL1 at 'Ser-90' which is pivotal for its interaction with CLOCK and which controls CLOCK nuclear entry. Phosphorylates FMR1, promoting FMR1-dependent formation of a membraneless compartment. May phosphorylate histone H2A on 'Ser-1'. The polypeptide is Casein kinase II subunit alpha (Csnk2a1) (Rattus norvegicus (Rat)).